We begin with the raw amino-acid sequence, 157 residues long: Protein Smg (157 aa).

The protein belongs to the Smg family.

In Buchnera aphidicola subsp. Acyrthosiphon pisum (strain Tuc7), this protein is Protein Smg.